The primary structure comprises 35 residues: Alpha-amanitin proprotein 2 (35 aa).

A propeptide spanning residues 1–10 (MFDTNSTRLP) is cleaved from the precursor. Ile-11 is modified ((3R,4R)-4,5-dihydroxyisoleucine; in form alpha-amanitin). Residue Ile-11 is modified to (3R,4S)-4-hydroxyisoleucine; in form gamma-amanitin. Positions 11 to 18 (IWGIGCNP) form a cross-link, cyclopeptide (Ile-Pro). A cross-link (2'-cysteinyl-6'-hydroxytryptophan sulfoxide (Trp-Cys)) is located at residues 12-16 (WGIGC). Pro-18 bears the 4-hydroxyproline mark. A propeptide spanning residues 19-35 (WTAEHVDQTLVSGNDIC) is cleaved from the precursor.

Belongs to the MSDIN fungal toxin family. Post-translationally, processed by the macrocyclase-peptidase enzyme POPB to yield a toxic bicyclic octapeptide. POPB first removes 10 residues from the N-terminus. Conformational trapping of the remaining peptide forces the enzyme to release this intermediate rather than proceed to macrocyclization. The enzyme rebinds the remaining peptide in a different conformation and catalyzes macrocyclization of the N-terminal 8 residues.

Functionally, major toxin belonging to the bicyclic octapeptides amatoxins that acts by binding non-competitively to RNA polymerase II and greatly slowing the elongation of transcripts from target promoters. This is Alpha-amanitin proprotein 2 from Galerina marginata (strain CBS 339.88).